The sequence spans 766 residues: Phosphoribosylformylglycinamidine synthase subunit PurL (766 aa).

Residue H46 is part of the active site. 2 residues coordinate ATP: Y49 and K88. Position 90 (E90) interacts with Mg(2+). Residues 91-94 (SHNH) and R113 contribute to the substrate site. The active-site Proton acceptor is the H92. D114 provides a ligand contact to Mg(2+). Q237 is a binding site for substrate. D265 lines the Mg(2+) pocket. Substrate is bound at residue 309–311 (ESQ). The ATP site is built by D520 and G557. Position 558 (N558) interacts with Mg(2+). S560 provides a ligand contact to substrate.

It belongs to the FGAMS family. In terms of assembly, monomer. Part of the FGAM synthase complex composed of 1 PurL, 1 PurQ and 2 PurS subunits.

Its subcellular location is the cytoplasm. The enzyme catalyses N(2)-formyl-N(1)-(5-phospho-beta-D-ribosyl)glycinamide + L-glutamine + ATP + H2O = 2-formamido-N(1)-(5-O-phospho-beta-D-ribosyl)acetamidine + L-glutamate + ADP + phosphate + H(+). Its pathway is purine metabolism; IMP biosynthesis via de novo pathway; 5-amino-1-(5-phospho-D-ribosyl)imidazole from N(2)-formyl-N(1)-(5-phospho-D-ribosyl)glycinamide: step 1/2. Part of the phosphoribosylformylglycinamidine synthase complex involved in the purines biosynthetic pathway. Catalyzes the ATP-dependent conversion of formylglycinamide ribonucleotide (FGAR) and glutamine to yield formylglycinamidine ribonucleotide (FGAM) and glutamate. The FGAM synthase complex is composed of three subunits. PurQ produces an ammonia molecule by converting glutamine to glutamate. PurL transfers the ammonia molecule to FGAR to form FGAM in an ATP-dependent manner. PurS interacts with PurQ and PurL and is thought to assist in the transfer of the ammonia molecule from PurQ to PurL. This Synechococcus sp. (strain JA-3-3Ab) (Cyanobacteria bacterium Yellowstone A-Prime) protein is Phosphoribosylformylglycinamidine synthase subunit PurL.